Consider the following 357-residue polypeptide: Guanine nucleotide-binding protein alpha-16 subunit (357 aa).

A lipid anchor (N-myristoyl glycine) is attached at G2. Residue C3 is the site of S-palmitoyl cysteine attachment. The G-alpha domain maps to 32–357 (RTIKLLLLGA…RDNLRTCGLY (326 aa)). The segment at 35–48 (KLLLLGAGESGKST) is G1 motif. GTP-binding positions include 40 to 47 (GAGESGKS), 175 to 181 (LRTRIKT), 200 to 204 (DVGGQ), 269 to 272 (NKKD), and A329. Residues S47 and T181 each contribute to the Mg(2+) site. The tract at residues 173–181 (DILRTRIKT) is G2 motif. Residues 196-205 (FLVFDVGGQR) are G3 motif. Residues 265–272 (ILFLNKKD) are G4 motif. Residues 327-332 (TCATDT) are G5 motif.

Belongs to the G-alpha family. G proteins are composed of 3 units; alpha, beta and gamma. The alpha chain contains the guanine nucleotide binding site.

In terms of biological role, guanine nucleotide-binding proteins (G proteins) are involved as modulators or transducers in various transmembrane signaling systems. In the 1-cell embryo, probably together with goa-1, controls nuclear rotation and spindle elongation during mitosis. During the first embryonic cell divisons, plays a role in gpr-1/2 cortical localization and in the proper orientation of EMS blastomere mitotic spindle. The protein is Guanine nucleotide-binding protein alpha-16 subunit (gpa-16) of Caenorhabditis elegans.